A 342-amino-acid chain; its full sequence is (Lyso)-N-acylphosphatidylethanolamine lipase (342 aa).

Positions 70–323 constitute an AB hydrolase-1 domain; it reads PLVMVHGFGG…EIEGASHHVY (254 aa).

This sequence belongs to the peptidase S33 family. ABHD4/ABHD5 subfamily. Highest levels in the CNS and in testis, intermediate levels in liver and kidney. Hardly detectable in heart.

It catalyses the reaction N-hexadecanoyl-1,2-di-(9Z-octadecenoyl)-sn-glycero-3-phosphoethanolamine + H2O = N-hexadecanoyl-1-(9Z-octadecenoyl)-sn-glycero-3-phosphoethanolamine + (9Z)-octadecenoate + H(+). It carries out the reaction an N-acyl-1,2-diacyl-sn-glycero-3-phosphoethanolamine + H2O = N,1-diacyl-sn-glycero-3-phosphoethanolamine + a fatty acid + H(+). The enzyme catalyses N-hexadecanoyl-1-(9Z-octadecenoyl)-sn-glycero-3-phosphoethanolamine + H2O = N-hexadecanoyl-sn-glycero-3-phosphoethanolamine + (9Z)-octadecenoate + H(+). The catalysed reaction is N-octadecanoyl-1-(9Z-octadecenoyl)-sn-glycero-3-phosphoethanolamine + H2O = N-octadecanoyl-sn-glycero-3-phospho-ethanolamine + (9Z)-octadecenoate + H(+). It catalyses the reaction N-eicosanoyl-1-(9Z-octadecenoyl)-sn-glycero-3-phosphoethanolamine + H2O = N-eicosanoyl-sn-glycero-3-phosphoethanolamine + (9Z)-octadecenoate + H(+). It carries out the reaction N,1-di-(9Z-octadecenoyl)-sn-glycero-3-phosphoethanolamine + H2O = N-(9Z-octadecenoyl)-sn-glycero-3-phosphoethanolamine + (9Z)-octadecenoate + H(+). The enzyme catalyses N-(5Z,8Z,11Z,14Z-eicosatetraenoyl)-1-(9Z-octadecenoyl)-sn-glycero-3-phosphoethanolamine + H2O = N-(5Z,8Z,11Z,14Z-eicosatetraenoyl)-sn-glycero-3-phosphoethanolamine + (9Z)-octadecenoate + H(+). The catalysed reaction is 1-octadecanoyl-2-(9Z-octadecenoyl)-sn-glycero-3-phospho-(N-hexadecanoyl)-serine + H2O = 1-octadecanoyl-2-hydroxy-sn-glycero-3-phospho-(N-hexadecanoyl)-serine + (9Z)-octadecenoate + H(+). It catalyses the reaction 1-O-(1Z-octadecenoyl)-2-(9Z-octadecenoyl)-sn-glycero-3-phospho-N-hexadecanoyl-ethanolamine + H2O = 1-O-(1Z-octadecenyl)-sn-glycero-3-phospho-N-hexadecanoyl-ethanolamine + (9Z)-octadecenoate + H(+). It carries out the reaction N,1-diacyl-sn-glycero-3-phosphoethanolamine + H2O = N-acyl-sn-glycero-3-phosphoethanolamine + a fatty acid + H(+). In terms of biological role, lysophospholipase selective for N-acyl phosphatidylethanolamine (NAPE). Contributes to the biosynthesis of N-acyl ethanolamines, including the endocannabinoid anandamide by hydrolyzing the sn-1 and sn-2 acyl chains from N-acyl phosphatidylethanolamine (NAPE) generating glycerophospho-N-acyl ethanolamine (GP-NAE), an intermediate for N-acyl ethanolamine biosynthesis. Hydrolyzes substrates bearing saturated, monounsaturated, polyunsaturated N-acyl chains. Shows no significant activity towards other lysophospholipids, including lysophosphatidylcholine, lysophosphatidylethanolamine and lysophosphatidylserine. In Mus musculus (Mouse), this protein is (Lyso)-N-acylphosphatidylethanolamine lipase.